The sequence spans 220 residues: 5'(3')-deoxyribonucleotidase, mitochondrial (220 aa).

The transit peptide at Met1–Ala23 directs the protein to the mitochondrion. Asp33 functions as the Nucleophile in the catalytic mechanism. Mg(2+) is bound by residues Asp33 and Asp35. Asp35 serves as the catalytic Proton donor. Asp35, Phe41, Phe67, Trp68, Val69, Trp88, Thr122, and Lys157 together coordinate substrate. Residue Asp168 participates in Mg(2+) binding.

It belongs to the 5'(3')-deoxyribonucleotidase family. Homodimer. It depends on Mg(2+) as a cofactor.

It is found in the mitochondrion. Its function is as follows. Dephosphorylates specifically the 5' and 2'(3')-phosphates of uracil and thymine deoxyribonucleotides, and so protects mitochondrial DNA replication from excess dTTP. Has only marginal activity towards dIMP and dGMP. The protein is 5'(3')-deoxyribonucleotidase, mitochondrial (Nt5m) of Mus musculus (Mouse).